The chain runs to 207 residues: Small ribosomal subunit protein uS4 (207 aa).

Residues 31–53 (KAKFDSKPGQHGRTSGARTSDFG) form a disordered region. Positions 97–160 (SRLDNVVYRM…KKQNRIVEAL (64 aa)) constitute an S4 RNA-binding domain.

Belongs to the universal ribosomal protein uS4 family. As to quaternary structure, part of the 30S ribosomal subunit. Contacts protein S5. The interaction surface between S4 and S5 is involved in control of translational fidelity.

In terms of biological role, one of the primary rRNA binding proteins, it binds directly to 16S rRNA where it nucleates assembly of the body of the 30S subunit. Functionally, with S5 and S12 plays an important role in translational accuracy. The protein is Small ribosomal subunit protein uS4 of Albidiferax ferrireducens (strain ATCC BAA-621 / DSM 15236 / T118) (Rhodoferax ferrireducens).